Here is a 37-residue protein sequence, read N- to C-terminus: Large ribosomal subunit protein bL36 (37 aa).

It belongs to the bacterial ribosomal protein bL36 family.

The chain is Large ribosomal subunit protein bL36 (rpmJ) from Mycoplasmoides gallisepticum (strain R(low / passage 15 / clone 2)) (Mycoplasma gallisepticum).